Consider the following 390-residue polypeptide: Bibenzyl synthase (390 aa).

Cysteine 164 is an active-site residue.

It belongs to the thiolase-like superfamily. Chalcone/stilbene synthases family.

It carries out the reaction 3-(3-hydroxyphenyl)-propanoyl-CoA + 3 malonyl-CoA + 3 H(+) = 3,3',5-trihydroxybibenzyl + 4 CO2 + 4 CoA. This is Bibenzyl synthase (BIBSY212) from Phalaenopsis sp. (Moth orchid).